Here is a 154-residue protein sequence, read N- to C-terminus: Protein X (154 aa).

The segment at 68–117 (PCALRFTSARCMETTVNAHQILPKVLYKRTLGLPAMSTTDLEAYFKDCVF) is mitochondrial targeting sequence.

The protein belongs to the orthohepadnavirus protein X family. As to quaternary structure, may form homodimer. May interact with host CEBPA, CFLAR, CREB1, DDB1, E4F1, HBXIP, HSPD1/HSP60, NFKBIA, POLR2E and SMAD4. Interacts with host SMC5-SMC6 complex and induces its degradation. Interacts with host TRPC4AP; leading to prevent ubiquitination of TRPC4AP. Interacts with host PLSCR1; this interaction promotes ubiquitination and degradation of HBx and impairs HBx-mediated cell proliferation. A fraction may be phosphorylated in insect cells and HepG2 cells, a human hepatoblastoma cell line. Phosphorylated in vitro by host protein kinase C or mitogen-activated protein kinase. N-acetylated in insect cells.

It localises to the host cytoplasm. It is found in the host nucleus. The protein resides in the host mitochondrion. Multifunctional protein that plays a role in silencing host antiviral defenses and promoting viral transcription. Does not seem to be essential for HBV infection. May be directly involved in development of cirrhosis and liver cancer (hepatocellular carcinoma). Most of cytosolic activities involve modulation of cytosolic calcium. The effect on apoptosis is controversial depending on the cell types in which the studies have been conducted. May induce apoptosis by localizing in mitochondria and causing loss of mitochondrial membrane potential. May also modulate apoptosis by binding host CFLAR, a key regulator of the death-inducing signaling complex (DISC). Promotes viral transcription by using the host E3 ubiquitin ligase DDB1 to target the SMC5-SMC6 complex to proteasomal degradation. This host complex would otherwise bind to viral episomal DNA, and prevents its transcription. Moderately stimulates transcription of many different viral and cellular transcription elements. Promoters and enhancers stimulated by HBx contain DNA binding sites for NF-kappa-B, AP-1, AP-2, c-EBP, ATF/CREB, or the calcium-activated factor NF-AT. In Homo sapiens (Human), this protein is Protein X.